Reading from the N-terminus, the 238-residue chain is uncharacterized protein (238 aa).

Helical transmembrane passes span 22–42, 49–69, 78–98, 105–125, 141–161, 166–186, and 208–228; these read VYGWMTAGLAVTALTSLGLYA, LFSLWWVWCFATLGVSFYIQA, AVMGLFLAYSVLEGMFFGTMV, FGGGIVWAAFGSAAVIFGLSA, ILMLALIGLMVISLGFLVVSL, PLMYLLICYLGLIIFVGLTVV, and LSLIMALQMYCNVIMIFWYLL.

Belongs to the BI1 family.

The protein resides in the cell membrane. This is an uncharacterized protein from Chlamydia muridarum (strain MoPn / Nigg).